Consider the following 373-residue polypeptide: Chaperone protein DnaJ (373 aa).

A J domain is found at 4 to 69 (NYYEILEISQ…EKRSIYDRYG (66 aa)). The CR-type zinc-finger motif lies at 133-210 (GCKKKIDFSY…CHGNGYEEIK (78 aa)). Zn(2+)-binding residues include C146, C149, C162, C165, C184, C187, C198, and C201. CXXCXGXG motif repeat units lie at residues 146–153 (CKSCKGSG), 162–169 (CPHCGGKG), 184–191 (CDHCKGSG), and 198–205 (CKTCHGNG).

Belongs to the DnaJ family. In terms of assembly, homodimer. It depends on Zn(2+) as a cofactor.

Its subcellular location is the cytoplasm. Functionally, participates actively in the response to hyperosmotic and heat shock by preventing the aggregation of stress-denatured proteins and by disaggregating proteins, also in an autonomous, DnaK-independent fashion. Unfolded proteins bind initially to DnaJ; upon interaction with the DnaJ-bound protein, DnaK hydrolyzes its bound ATP, resulting in the formation of a stable complex. GrpE releases ADP from DnaK; ATP binding to DnaK triggers the release of the substrate protein, thus completing the reaction cycle. Several rounds of ATP-dependent interactions between DnaJ, DnaK and GrpE are required for fully efficient folding. Also involved, together with DnaK and GrpE, in the DNA replication of plasmids through activation of initiation proteins. The protein is Chaperone protein DnaJ of Campylobacter lari (strain RM2100 / D67 / ATCC BAA-1060).